Consider the following 221-residue polypeptide: Pyridoxal phosphate homeostasis protein (221 aa).

Lys-26 is subject to N6-(pyridoxal phosphate)lysine.

This sequence belongs to the pyridoxal phosphate-binding protein YggS/PROSC family.

In terms of biological role, pyridoxal 5'-phosphate (PLP)-binding protein, which is involved in PLP homeostasis. This chain is Pyridoxal phosphate homeostasis protein, found in Corynebacterium glutamicum (strain ATCC 13032 / DSM 20300 / JCM 1318 / BCRC 11384 / CCUG 27702 / LMG 3730 / NBRC 12168 / NCIMB 10025 / NRRL B-2784 / 534).